We begin with the raw amino-acid sequence, 324 residues long: NAC domain-containing protein 21/22 (324 aa).

The NAC domain occupies L19–K171. The short motif at R120 to D137 is the Bipartite nuclear localization signal element.

Dimer. Interacts with SINAT5. Post-translationally, ubiquitinated. The interaction with SINAT5 mediate its proteasome-dependent degradation. In terms of tissue distribution, predominantly expressed in the root tip and in lateral root initiation sites. Also detected in expanding cotyledon, and in leaf primordia.

Its subcellular location is the nucleus. Functionally, transcriptional activator that mediates auxin signaling to promote lateral root development. Activates the expression of two downstream auxin-responsive genes, DBP and AIR3. This chain is NAC domain-containing protein 21/22 (NAC021), found in Arabidopsis thaliana (Mouse-ear cress).